Reading from the N-terminus, the 92-residue chain is Exodeoxyribonuclease 7 small subunit (92 aa).

Residues 1-22 form a disordered region; that stretch reads MPKKNAISESTNSTPETAPAMT. Positions 7–16 are enriched in polar residues; that stretch reads ISESTNSTPE.

The protein belongs to the XseB family. Heterooligomer composed of large and small subunits.

The protein resides in the cytoplasm. It carries out the reaction Exonucleolytic cleavage in either 5'- to 3'- or 3'- to 5'-direction to yield nucleoside 5'-phosphates.. Bidirectionally degrades single-stranded DNA into large acid-insoluble oligonucleotides, which are then degraded further into small acid-soluble oligonucleotides. The sequence is that of Exodeoxyribonuclease 7 small subunit from Photorhabdus laumondii subsp. laumondii (strain DSM 15139 / CIP 105565 / TT01) (Photorhabdus luminescens subsp. laumondii).